Consider the following 40-residue polypeptide: Esterase-4 (40 aa).

The protein belongs to the type-B carboxylesterase/lipase family.

It carries out the reaction a carboxylic ester + H2O = an alcohol + a carboxylate + H(+). This is Esterase-4 (Est-4) from Drosophila mojavensis (Fruit fly).